We begin with the raw amino-acid sequence, 367 residues long: Flagellar P-ring protein (367 aa).

The signal sequence occupies residues 1 to 22 (MRRMLVIRWILAIHLIATQVFA).

The protein belongs to the FlgI family. The basal body constitutes a major portion of the flagellar organelle and consists of four rings (L,P,S, and M) mounted on a central rod.

The protein resides in the periplasm. It is found in the bacterial flagellum basal body. Its function is as follows. Assembles around the rod to form the L-ring and probably protects the motor/basal body from shearing forces during rotation. In Legionella pneumophila subsp. pneumophila (strain Philadelphia 1 / ATCC 33152 / DSM 7513), this protein is Flagellar P-ring protein.